The following is a 417-amino-acid chain: NADH-quinone oxidoreductase subunit D (417 aa).

This sequence belongs to the complex I 49 kDa subunit family. NDH-1 is composed of 14 different subunits. Subunits NuoB, C, D, E, F, and G constitute the peripheral sector of the complex.

The protein resides in the cell inner membrane. It carries out the reaction a quinone + NADH + 5 H(+)(in) = a quinol + NAD(+) + 4 H(+)(out). Its function is as follows. NDH-1 shuttles electrons from NADH, via FMN and iron-sulfur (Fe-S) centers, to quinones in the respiratory chain. The immediate electron acceptor for the enzyme in this species is believed to be ubiquinone. Couples the redox reaction to proton translocation (for every two electrons transferred, four hydrogen ions are translocated across the cytoplasmic membrane), and thus conserves the redox energy in a proton gradient. This Nitrosospira multiformis (strain ATCC 25196 / NCIMB 11849 / C 71) protein is NADH-quinone oxidoreductase subunit D.